Consider the following 278-residue polypeptide: MSSRSSRTIYVGNLPGDIREREVEDLFSKYGPVVQIDLKIPPRPPGYAFVEFEDARDADDAIYGRDGYDFDGHHLRVELAHGGRRSSHDARGSYSGRGRGGRGGGDGGGRERGPSRRSEYRVVVSGLPSSASWQDLKDHMRKGGEVCFSQVFRDGRGTTGIVDYTSYEDMKYALDDTEFRNAFSHEYVRVREYDSRRDSRSPSRGRSYSKSRSRGRSPSRSRSRSRSRSKSRSPKAKSLRRSPAKSTSRSPRSRSRSKSRSLSPRGWVTVERHWIALI.

The RRM 1 domain maps to 7 to 82; that stretch reads RTIYVGNLPG…HHLRVELAHG (76 aa). Basic and acidic residues predominate over residues 81–91; that stretch reads HGGRRSSHDAR. Disordered stretches follow at residues 81–121 and 192–263; these read HGGR…SEYR and EYDS…RSLS. The segment covering 95 to 107 has biased composition (gly residues); that stretch reads SGRGRGGRGGGDG. 2 stretches are compositionally biased toward basic and acidic residues: residues 108–120 and 192–201; these read GGRERGPSRRSEY and EYDSRRDSRS. The RRM 2 domain occupies 120–195; that stretch reads YRVVVSGLPS…EYVRVREYDS (76 aa). A phosphoserine mark is found at S201, S203, S225, S231, S233, S242, S250, S259, and S263. Residues 207 to 243 show a composition bias toward basic residues; that stretch reads SYSKSRSRGRSPSRSRSRSRSRSKSRSPKAKSLRRSP.

The protein belongs to the splicing factor SR family. SR subfamily. As to quaternary structure, component of the spliceosome.

It is found in the nucleus speckle. The protein localises to the nucleus. Its subcellular location is the nucleoplasm. Probably involved in intron recognition and spliceosome assembly. The polypeptide is Serine/arginine-rich splicing factor SR34B (SR34B) (Arabidopsis thaliana (Mouse-ear cress)).